The primary structure comprises 307 residues: MSLNFFLRRYTVFPWSRKLGQYYHDAKRESSAWTESFHPFDEDLSKAALTFCITALLASLAYFLRQKEIVRLGCDLMNIFYVFDECADIADKEGASQIRDVVMDDLHRPEKTCPGGEILPGEMVKYVLLLCPEIPETYYNTKSFGFAPQSSSPQPHIVCATLSRISMPTQQQWFNVKRTIGPNVFLARSATVLPYAETHTFYHPRMIALREQAPFLDINSYPMKVRGLVQGSINWLEGYAAGVQAAFLDNIANLPSCAKEVESRVNIYVNELAQWARGNDDWTFESGRYFGDRGPENQSDIPTSSNR.

The segment at 287 to 307 is disordered; sequence GRYFGDRGPENQSDIPTSSNR. Over residues 296 to 307 the composition is skewed to polar residues; sequence ENQSDIPTSSNR.

Belongs to the terpene synthase family.

The sequence is that of Sesquiterpene synthase-like protein Agr10 from Cyclocybe aegerita (Black poplar mushroom).